The chain runs to 197 residues: MPQTILPISVGQMVLICIFILIILFVITKAKGIKGSWSKKSEIDPFINHSLSFYVPEEDELKDSEGERICRKFLRETVGVLFKDRDGNPEPFNKARPDFLKNPVTSGKNGNFNLEIDCYSPKLKLGVEYNGAQHYKFIPHFHKNKEAFRNQQYRDELKRRMCNDNNVTLIEVPYTVKDIPTYLYNKLKPLGYLNSLQ.

A helical transmembrane segment spans residues 7–27 (PISVGQMVLICIFILIILFVI).

Belongs to the IIV-6 307L family.

It is found in the membrane. This is an uncharacterized protein from Acheta domesticus (House cricket).